A 517-amino-acid chain; its full sequence is Cytochrome P450 monooxygenase 124 (517 aa).

The chain crosses the membrane as a helical span at residues 3-23 (SLLVLFVSLLALGALKKHLDF). Cys453 serves as a coordination point for heme.

It belongs to the cytochrome P450 family. Requires heme as cofactor.

It is found in the membrane. Its pathway is secondary metabolite biosynthesis. Cytochrome P450 monooxygenase that is able to use trans-stilbene as a substrate for oxidation. This Postia placenta (strain ATCC 44394 / Madison 698-R) (Brown rot fungus) protein is Cytochrome P450 monooxygenase 124.